A 185-amino-acid chain; its full sequence is Ribosome-recycling factor (185 aa).

Belongs to the RRF family.

Its subcellular location is the cytoplasm. In terms of biological role, responsible for the release of ribosomes from messenger RNA at the termination of protein biosynthesis. May increase the efficiency of translation by recycling ribosomes from one round of translation to another. This chain is Ribosome-recycling factor, found in Dichelobacter nodosus (strain VCS1703A).